Here is a 256-residue protein sequence, read N- to C-terminus: ATP synthase subunit a (256 aa).

Helical transmembrane passes span 33–53 (ITTF…LTLL), 92–112 (YFPL…IGMI), 122–142 (MVFI…IGLY), 148–168 (FFAL…LVLI), 191–211 (GHLL…VSIV), and 235–255 (MIQS…GLYL).

It belongs to the ATPase A chain family. In terms of assembly, F-type ATPases have 2 components, CF(1) - the catalytic core - and CF(0) - the membrane proton channel. CF(1) has five subunits: alpha(3), beta(3), gamma(1), delta(1), epsilon(1). CF(0) has three main subunits: a, b and c.

It is found in the mitochondrion inner membrane. Its function is as follows. Mitochondrial membrane ATP synthase (F(1)F(0) ATP synthase or Complex V) produces ATP from ADP in the presence of a proton gradient across the membrane which is generated by electron transport complexes of the respiratory chain. F-type ATPases consist of two structural domains, F(1) - containing the extramembraneous catalytic core and F(0) - containing the membrane proton channel, linked together by a central stalk and a peripheral stalk. During catalysis, ATP synthesis in the catalytic domain of F(1) is coupled via a rotary mechanism of the central stalk subunits to proton translocation. Key component of the proton channel; it may play a direct role in the translocation of protons across the membrane. This chain is ATP synthase subunit a (ATP6), found in Wickerhamomyces canadensis (Yeast).